A 198-amino-acid chain; its full sequence is 8-oxoguanine DNA glycosylase/AP lyase (198 aa).

Active-site residues include lysine 122 and aspartate 140.

This sequence belongs to the type-2 OGG1 family. Monomer.

The enzyme catalyses 2'-deoxyribonucleotide-(2'-deoxyribose 5'-phosphate)-2'-deoxyribonucleotide-DNA = a 3'-end 2'-deoxyribonucleotide-(2,3-dehydro-2,3-deoxyribose 5'-phosphate)-DNA + a 5'-end 5'-phospho-2'-deoxyribonucleoside-DNA + H(+). Its function is as follows. Catalyzes the excision of an oxidatively damaged form of guanine (7,8-dihydro-8-oxoguanine = 8-oxoG) from DNA. Also cleaves the DNA backbone at apurinic/apyrimidinic sites (AP sites). Efficiently cleaves oligomers containing 8-oxoG:C and 8-oxoG:G base pairs, and is less effective on oligomers containing 8-oxoG:T and 8-oxoG:A mispairs. The protein is 8-oxoguanine DNA glycosylase/AP lyase of Archaeoglobus fulgidus (strain ATCC 49558 / DSM 4304 / JCM 9628 / NBRC 100126 / VC-16).